Consider the following 247-residue polypeptide: E3 ubiquitin-protein ligase RNF182 (247 aa).

An RING-type zinc finger spans residues 20-68; that stretch reads CKICYNRYNLKQRKPKVLECCHRVCAKCLYKIIDFGDSPQGVIVCPFCR. A run of 2 helical transmembrane segments spans residues 184 to 204 and 211 to 231; these read VLVW…IYLL and LGVV…VYGF.

As to quaternary structure, interacts with ATP6V0C.

It localises to the membrane. The protein localises to the cytoplasm. The catalysed reaction is S-ubiquitinyl-[E2 ubiquitin-conjugating enzyme]-L-cysteine + [acceptor protein]-L-lysine = [E2 ubiquitin-conjugating enzyme]-L-cysteine + N(6)-ubiquitinyl-[acceptor protein]-L-lysine.. Its pathway is protein modification; protein ubiquitination. Its function is as follows. E3 ubiquitin-protein ligase that mediates the ubiquitination of ATP6V0C and targets it to degradation via the ubiquitin-proteasome pathway. Also plays a role in the inhibition of TLR-triggered innate immune response by mediating 'Lys'-48-linked ubiquitination and subsequent degradation of NF-kappa-B component RELA. The chain is E3 ubiquitin-protein ligase RNF182 (RNF182) from Ailuropoda melanoleuca (Giant panda).